The sequence spans 257 residues: Ditrans,polycis-undecaprenyl-diphosphate synthase ((2E,6E)-farnesyl-diphosphate specific) (257 aa).

The active site involves Asp-23. A Mg(2+)-binding site is contributed by Asp-23. Residues 24 to 27, Trp-28, Arg-36, His-40, and 68 to 70 contribute to the substrate site; these read GNGR and SSE. Asn-71 (proton acceptor) is an active-site residue. Residues Trp-72, Arg-74, Arg-191, and 197–199 each bind substrate; that span reads RIS. Glu-210 provides a ligand contact to Mg(2+).

The protein belongs to the UPP synthase family. In terms of assembly, homodimer. The cofactor is Mg(2+).

The enzyme catalyses 8 isopentenyl diphosphate + (2E,6E)-farnesyl diphosphate = di-trans,octa-cis-undecaprenyl diphosphate + 8 diphosphate. Catalyzes the sequential condensation of isopentenyl diphosphate (IPP) with (2E,6E)-farnesyl diphosphate (E,E-FPP) to yield (2Z,6Z,10Z,14Z,18Z,22Z,26Z,30Z,34E,38E)-undecaprenyl diphosphate (di-trans,octa-cis-UPP). UPP is the precursor of glycosyl carrier lipid in the biosynthesis of bacterial cell wall polysaccharide components such as peptidoglycan and lipopolysaccharide. This Xanthomonas axonopodis pv. citri (strain 306) protein is Ditrans,polycis-undecaprenyl-diphosphate synthase ((2E,6E)-farnesyl-diphosphate specific).